We begin with the raw amino-acid sequence, 502 residues long: MANQDAAQHDENHLIAERRAKLAARRDQAAEAGGSAFPNDFRRDSLAAELQAELGDKDKAELETLDRRASVAGRIMRKRGPFIVIQDVSDQIQLYVDKKGLPAETLDDIKSWDIGDIVAARGPVHKSGKGDLYVMMGEAQLLTKSLRPLPDKYHGLTDTEARYRQRYVDLIMNPESRRVFEVRSRVISGIRRFLVERGFMEVETPMLQQIPGGATARPFVTHHNALDIDMYLRVAPELYLKRLVVGGFERVFEINRNFRNEGLSTRHNPEFTMLEFYWAYADYRDLLDLTEAMIRDVAHEVLGTTTVEYQGARYELGEPFQRLTLRQSILEYGDGLGESDIDTFDGARATCERLGIPVKPSWGLGKLQTEIFEAVAEDKLDRPTFITEYPAEVSPLARRNDTNPHVTDRFEFFVGGRELANGFSELNDAEDQAERFAAQAAEKDAGDLEAMYYDADYVRALEYGMPPTAGEGIGIDRLVMLLTDSPSIRDVLLFPAMRPSAD.

Mg(2+) contacts are provided by E411 and E418.

Belongs to the class-II aminoacyl-tRNA synthetase family. In terms of assembly, homodimer. Mg(2+) is required as a cofactor.

The protein localises to the cytoplasm. It catalyses the reaction tRNA(Lys) + L-lysine + ATP = L-lysyl-tRNA(Lys) + AMP + diphosphate. The sequence is that of Lysine--tRNA ligase from Chromohalobacter salexigens (strain ATCC BAA-138 / DSM 3043 / CIP 106854 / NCIMB 13768 / 1H11).